A 720-amino-acid chain; its full sequence is 1,4-alpha-glucan branching enzyme GlgB (720 aa).

Catalysis depends on Asp400, which acts as the Nucleophile. Catalysis depends on Glu453, which acts as the Proton donor.

This sequence belongs to the glycosyl hydrolase 13 family. GlgB subfamily. Monomer.

It catalyses the reaction Transfers a segment of a (1-&gt;4)-alpha-D-glucan chain to a primary hydroxy group in a similar glucan chain.. It participates in glycan biosynthesis; glycogen biosynthesis. Functionally, catalyzes the formation of the alpha-1,6-glucosidic linkages in glycogen by scission of a 1,4-alpha-linked oligosaccharide from growing alpha-1,4-glucan chains and the subsequent attachment of the oligosaccharide to the alpha-1,6 position. This is 1,4-alpha-glucan branching enzyme GlgB from Chlamydia pneumoniae (Chlamydophila pneumoniae).